The primary structure comprises 211 residues: Small ribosomal subunit protein uS3 (211 aa).

In terms of domain architecture, KH type-2 spans 38–106 (LRNFLKKRLY…EIYLNIQEVR (69 aa)).

This sequence belongs to the universal ribosomal protein uS3 family. In terms of assembly, part of the 30S ribosomal subunit. Forms a tight complex with proteins S10 and S14.

Functionally, binds the lower part of the 30S subunit head. Binds mRNA in the 70S ribosome, positioning it for translation. The chain is Small ribosomal subunit protein uS3 from Geobacter sulfurreducens (strain ATCC 51573 / DSM 12127 / PCA).